Reading from the N-terminus, the 501-residue chain is Glutamate--tRNA ligase (501 aa).

Residues 11 to 21 carry the 'HIGH' region motif; sequence PSPTGPLHIGG. A 'KMSKS' region motif is present at residues 260–264; the sequence is KLSKR. Lysine 263 is a binding site for ATP.

Belongs to the class-I aminoacyl-tRNA synthetase family. Glutamate--tRNA ligase type 1 subfamily. As to quaternary structure, monomer.

The protein localises to the cytoplasm. It catalyses the reaction tRNA(Glu) + L-glutamate + ATP = L-glutamyl-tRNA(Glu) + AMP + diphosphate. Catalyzes the attachment of glutamate to tRNA(Glu) in a two-step reaction: glutamate is first activated by ATP to form Glu-AMP and then transferred to the acceptor end of tRNA(Glu). In Flavobacterium johnsoniae (strain ATCC 17061 / DSM 2064 / JCM 8514 / BCRC 14874 / CCUG 350202 / NBRC 14942 / NCIMB 11054 / UW101) (Cytophaga johnsonae), this protein is Glutamate--tRNA ligase.